Reading from the N-terminus, the 453-residue chain is Glutamyl-tRNA(Gln) amidotransferase subunit A (453 aa).

Residues K53 and S128 each act as charge relay system in the active site. Residue S152 is the Acyl-ester intermediate of the active site.

The protein belongs to the amidase family. GatA subfamily. As to quaternary structure, heterotrimer of A, B and C subunits.

It catalyses the reaction L-glutamyl-tRNA(Gln) + L-glutamine + ATP + H2O = L-glutaminyl-tRNA(Gln) + L-glutamate + ADP + phosphate + H(+). In terms of biological role, allows the formation of correctly charged Gln-tRNA(Gln) through the transamidation of misacylated Glu-tRNA(Gln) in organisms which lack glutaminyl-tRNA synthetase. The reaction takes place in the presence of glutamine and ATP through an activated gamma-phospho-Glu-tRNA(Gln). This is Glutamyl-tRNA(Gln) amidotransferase subunit A from Helicobacter pylori (strain G27).